The chain runs to 208 residues: Thymidylate kinase (208 aa).

An ATP-binding site is contributed by 9 to 16 (GGEGCGKS).

The protein belongs to the thymidylate kinase family.

The enzyme catalyses dTMP + ATP = dTDP + ADP. Its function is as follows. Phosphorylation of dTMP to form dTDP in both de novo and salvage pathways of dTTP synthesis. The sequence is that of Thymidylate kinase from Dehalococcoides mccartyi (strain CBDB1).